A 372-amino-acid polypeptide reads, in one-letter code: Lysophosphatidic acid receptor 5 (372 aa).

Topologically, residues 1–30 (MFANSSANTTSTNSSVLQCPDYRDTHRLHM) are extracellular. Residues asparagine 4, asparagine 8, and asparagine 13 are each glycosylated (N-linked (GlcNAc...) asparagine). The helical transmembrane segment at 31-51 (VVYSLVLATGLPLNALALWVF) threads the bilayer. Residues 52–59 (LRVLRVHS) are Cytoplasmic-facing. The helical transmembrane segment at 60 to 80 (VVSVYMCNLAASDLLFTLSLP) threads the bilayer. The Extracellular portion of the chain corresponds to 81–100 (LRLSYYAQHHWPFPGFLCQT). A disulfide bridge links cysteine 98 with cysteine 179. Residues 101-121 (SGAIFQMNMYGSCLFLMLINV) form a helical membrane-spanning segment. Topologically, residues 122–140 (DRYAAIVHPLRLRHLRRPR) are cytoplasmic. The helical transmembrane segment at 141-161 (VARRLCLGVWALILLFAVPAA) threads the bilayer. The Extracellular portion of the chain corresponds to 162 to 191 (RVHSPSHCTYKNITVRLCFESFSDELWKGR). Asparagine 173 is a glycosylation site (N-linked (GlcNAc...) asparagine). A helical transmembrane segment spans residues 192–212 (LLPLLLLAEILGFLLPLAAVV). The Cytoplasmic portion of the chain corresponds to 213-243 (YSSGRVFWTLARPDATQSQRRRKTVRLLLAN). A helical transmembrane segment spans residues 244–264 (LIIFLLCFVPYNSTLAVYGLL). At 265–280 (RANLVKNSIQDRDQVR) the chain is on the extracellular side. A helical transmembrane segment spans residues 281–301 (GVLMIMVLLAGANCVLDPLVY). The Cytoplasmic segment spans residues 302-372 (YFSAEGFRNT…PDNCSQDSAL (71 aa)).

This sequence belongs to the G-protein coupled receptor 1 family.

Its subcellular location is the cell membrane. Its function is as follows. Receptor for lysophosphatidic acid (LPA), a mediator of diverse cellular activities. The polypeptide is Lysophosphatidic acid receptor 5 (Lpar5) (Mus musculus (Mouse)).